Consider the following 344-residue polypeptide: DNA-directed RNA polymerase subunit alpha (344 aa).

The tract at residues 1–246 (MPMERFLKDF…EFLFPLVDFE (246 aa)) is alpha N-terminal domain (alpha-NTD). Residues 259–344 (ESSNLLDMSI…VLSKNVKISE (86 aa)) are alpha C-terminal domain (alpha-CTD).

The protein belongs to the RNA polymerase alpha chain family. Homodimer. The RNAP catalytic core consists of 2 alpha, 1 beta, 1 beta' and 1 omega subunit. When a sigma factor is associated with the core the holoenzyme is formed, which can initiate transcription.

It catalyses the reaction RNA(n) + a ribonucleoside 5'-triphosphate = RNA(n+1) + diphosphate. DNA-dependent RNA polymerase catalyzes the transcription of DNA into RNA using the four ribonucleoside triphosphates as substrates. This is DNA-directed RNA polymerase subunit alpha from Borreliella afzelii (strain PKo) (Borrelia afzelii).